The primary structure comprises 136 residues: Early E3 15.3 kDa protein (136 aa).

Belongs to the adenoviridae E3_15 family.

Protects virus-infected cells from TNF-induced cytolysis. The protein is Early E3 15.3 kDa protein of Human adenovirus B serotype 3 (HAdV-3).